Consider the following 399-residue polypeptide: Delta(12) acyl-lipid conjugase (11E,13E-forming) (399 aa).

The disordered stretch occupies residues 11–30; it reads RNGGGPKKKMGPGQGLGPGE. A run of 2 helical transmembrane segments spans residues 61–81 and 93–113; these read FSYL…ADTY and LAWP…WGIA. The Histidine box-1 signature appears at 114–118; the sequence is HDCGH. The chain crosses the membrane as a helical span at residues 126–146; that stretch reads LVDDVVGFLIHSLVFVPYFSF. Residues 150–154 carry the Histidine box-2 motif; it reads HRRHH. Helical transmembrane passes span 188–208, 232–252, and 258–278; these read VFII…FNIS, VLVH…YRIA, and GWLI…VVLI. Residues 325–329 carry the Histidine box-3 motif; that stretch reads HVVHH.

It belongs to the fatty acid desaturase type 1 family. Expressed in developing seeds, but not in leaves.

It localises to the membrane. The enzyme catalyses a (9Z,12Z)-octadecadienoyl-containing glycerolipid + 2 Fe(II)-[cytochrome b5] + O2 + 2 H(+) = a (9Z,11E,13E)-octadecatrienoyl-containing glycerolipid + 2 Fe(III)-[cytochrome b5] + 2 H2O. The catalysed reaction is (9Z,12Z,15Z)-octadecatrienoyl-containing glycerolipid + 2 Fe(II)-[cytochrome b5] + O2 + 2 H(+) = a (9Z,11E,13E,15Z)-octadecatetraenoyl-containing glycerolipid + 2 Fe(III)-[cytochrome b5] + 2 H2O. It functions in the pathway lipid metabolism; polyunsaturated fatty acid biosynthesis. Converts linoleic acid to alpha-eleostearic acid (18:3(9Z,11E,13E)) and alpha-linolenic acid to alpha-parinaric acid (18:4(9Z,11E, 13E, 15Z)). Converts a single cis double bond at carbon 12 to two conjugated trans bonds at positions 11 and 13. The sequence is that of Delta(12) acyl-lipid conjugase (11E,13E-forming) from Momordica charantia (Bitter gourd).